A 1265-amino-acid polypeptide reads, in one-letter code: Cohesin subunit SA-1 (1265 aa).

A compositionally biased stretch (polar residues) spans 1-16; that stretch reads MITSELSVLQDSTNES. Disordered regions lie at residues 1–21 and 37–91; these read MITS…VMHT and DLEV…EGDP. Basic and acidic residues predominate over residues 62-73; the sequence is TPGDRSRAEPGS. Residues 303-388 enclose the SCD domain; sequence FVHRYRDAIA…NRFKDRIVSM (86 aa). 2 disordered regions span residues 1063–1097 and 1111–1130; these read GDED…KRVI and DTIQ…TVLR. Residues 1069–1082 are compositionally biased toward low complexity; the sequence is SVNSGGSNSKGSSV. The segment covering 1083–1095 has biased composition (basic residues); it reads RSKKGRPPLHKKR. The span at 1111-1129 shows a compositional bias: polar residues; it reads DTIQTPGALTTPQLTSTVL.

The protein belongs to the SCC3 family. In terms of assembly, interacts directly with RAD21 in cohesin complex. Cohesin complexes are composed of a heterodimer between and SMC3, which are attached via their hinge domain, and RAD21 which link them at their heads, and one STAG protein (STAG1 OR STAG2). In cohesin complexes, STAG1 is mutually exclusive with STAG2. Post-translationally, phosphorylated by PLK1. The large dissociation of cohesin from chromosome arms during prophase is partly due to its phosphorylation.

It localises to the nucleus. The protein localises to the chromosome. It is found in the centromere. In terms of biological role, component of cohesin complex, a complex required for the cohesion of sister chromatids after DNA replication. The cohesin complex apparently forms a large proteinaceous ring within which sister chromatids can be trapped. At anaphase, the complex is cleaved and dissociates from chromatin, allowing sister chromatids to segregate. The cohesin complex may also play a role in spindle pole assembly during mitosis. This Xenopus laevis (African clawed frog) protein is Cohesin subunit SA-1 (stag1).